Here is a 422-residue protein sequence, read N- to C-terminus: Mitogen-activated protein kinase spm1 (422 aa).

One can recognise a Protein kinase domain in the interval 21–314; sequence FKVVKELGQG…VDDALEHPYL (294 aa). ATP contacts are provided by residues 27-35 and K52; that span reads LGQGAYGIV. D149 functions as the Proton acceptor in the catalytic mechanism. Phosphothreonine is present on T186. The TXY motif lies at 186–188; it reads TEY. A Phosphotyrosine modification is found at Y188. The disordered stretch occupies residues 359–422; sequence RRRSHPTNPT…DHKSDDNRHN (64 aa). Positions 364-379 are enriched in polar residues; the sequence is PTNPTVNIPQPAQTVP. The segment covering 380–397 has biased composition (low complexity); that stretch reads SNDNGSFNVSSSSSSQTS. Basic and acidic residues predominate over residues 411-422; the sequence is AIDHKSDDNRHN.

Belongs to the protein kinase superfamily. CMGC Ser/Thr protein kinase family. MAP kinase subfamily. Requires Mg(2+) as cofactor. Post-translationally, dually phosphorylated on Thr-186 and Tyr-188, which activates the enzyme.

It carries out the reaction L-seryl-[protein] + ATP = O-phospho-L-seryl-[protein] + ADP + H(+). The enzyme catalyses L-threonyl-[protein] + ATP = O-phospho-L-threonyl-[protein] + ADP + H(+). With respect to regulation, activated by tyrosine and threonine phosphorylation by skh1/pek1. Functionally, regulates cell integrity and functions coordinately with the protein kinase C pathway (pck1 and pck2). Involved the regulation of wall architecture, cell shape, cytokinesis in exponential and stationary phase, and metabolism of ions. The polypeptide is Mitogen-activated protein kinase spm1 (spm1) (Schizosaccharomyces pombe (strain 972 / ATCC 24843) (Fission yeast)).